The primary structure comprises 108 residues: Protein YcgL (108 aa).

Residues 12 to 96 (MFCVIYRSSK…PPEDLLKQHL (85 aa)) form the YcgL domain.

This Escherichia coli O17:K52:H18 (strain UMN026 / ExPEC) protein is Protein YcgL.